We begin with the raw amino-acid sequence, 265 residues long: Glutamate racemase (265 aa).

Residues 13–14 (DS) and 45–46 (YG) each bind substrate. Residue Cys77 is the Proton donor/acceptor of the active site. 78–79 (NT) lines the substrate pocket. Cys185 acts as the Proton donor/acceptor in catalysis. Residue 186–187 (TH) coordinates substrate.

This sequence belongs to the aspartate/glutamate racemases family.

The enzyme catalyses L-glutamate = D-glutamate. It participates in cell wall biogenesis; peptidoglycan biosynthesis. Functionally, provides the (R)-glutamate required for cell wall biosynthesis. The polypeptide is Glutamate racemase (Vibrio cholerae serotype O1 (strain ATCC 39315 / El Tor Inaba N16961)).